The following is a 184-amino-acid chain: Gastrokine-2 (184 aa).

The N-terminal stretch at 1-20 (MKSLVAFLVVLSILRIQSQA) is a signal peptide. The BRICHOS domain maps to 54-151 (HSGSCSSTTI…LCKHIPLYEG (98 aa)). A disulfide bridge connects residues C81 and C143.

In terms of assembly, heterodimer with TFF1; disulfide linked. Interacts with TFF2.

It localises to the secreted. The polypeptide is Gastrokine-2 (Gkn2) (Rattus norvegicus (Rat)).